A 301-amino-acid chain; its full sequence is Ribosomal RNA small subunit methyltransferase H (301 aa).

S-adenosyl-L-methionine is bound by residues 33 to 35 (GGH), Asp-52, Phe-79, Asp-100, and Gln-107.

Belongs to the methyltransferase superfamily. RsmH family.

Its subcellular location is the cytoplasm. It carries out the reaction cytidine(1402) in 16S rRNA + S-adenosyl-L-methionine = N(4)-methylcytidine(1402) in 16S rRNA + S-adenosyl-L-homocysteine + H(+). Functionally, specifically methylates the N4 position of cytidine in position 1402 (C1402) of 16S rRNA. The polypeptide is Ribosomal RNA small subunit methyltransferase H (Mycoplasmopsis synoviae (strain 53) (Mycoplasma synoviae)).